Reading from the N-terminus, the 469-residue chain is Glutamate--tRNA ligase 2 (469 aa).

The 'HIGH' region motif lies at 8–18; that stretch reads PSPTGFLHVGG. The 'KMSKS' region motif lies at 250-254; the sequence is KLSKR. Residue lysine 253 participates in ATP binding.

This sequence belongs to the class-I aminoacyl-tRNA synthetase family. Glutamate--tRNA ligase type 1 subfamily. Monomer.

It is found in the cytoplasm. The catalysed reaction is tRNA(Glu) + L-glutamate + ATP = L-glutamyl-tRNA(Glu) + AMP + diphosphate. Functionally, catalyzes the attachment of glutamate to tRNA(Glu) in a two-step reaction: glutamate is first activated by ATP to form Glu-AMP and then transferred to the acceptor end of tRNA(Glu). This Thermotoga petrophila (strain ATCC BAA-488 / DSM 13995 / JCM 10881 / RKU-1) protein is Glutamate--tRNA ligase 2.